Here is a 419-residue protein sequence, read N- to C-terminus: Double-stranded RNA-binding protein 1 (419 aa).

DRBM domains follow at residues 15–84 and 101–170; these read VFKS…ELAK and LCKN…AIQS. The short motif at 207–222 is the Bipartite nuclear localization element; it reads KARKAQFKKKAQKGKR. 6 repeat units span residues 247–274, 275–302, 303–330, 331–358, 359–386, and 387–414. The 6 X 28 AA repeats of E-K-I-E-T-T-P-N-L-E-[PS]-[PS]-S-C-M-[NS]-G-L-K-E-A-A-F-G-S-V-E-T stretch occupies residues 247–414; that stretch reads EKIETTPNLE…KEAAFGSVET (168 aa).

In terms of assembly, homodimer. Heterodimer with DRB2, DRB4 or DRB5. Interacts with SE and DCL1. Interacts with RCF3, RS40 and RS41. As to expression, expressed in rosette and cauline leaves, stems, roots, flowers and siliques.

The protein resides in the nucleus. It is found in the nucleus speckle. Functionally, double-stranded RNA-binding protein involved in RNA-mediated post-transcriptional gene silencing (PTGS). Functions in the microRNAs (miRNAs) biogenesis by assisting DICER-LIKE 1 (DCL1) in the accurate processing from primary miRNAs (pri-miRNAs) to miRNAs in the nucleus. Forms a complex with SERRATE (SE) and DCL1 to promote accurate processing of pri-miRNAs by DCL1. Binds and assist DCL1 for accurate processing of precursor miRNAs (pre-miRNA). Indirectly involved in the production of trans-acting small interfering RNAs (ta-siRNAs) derived from the TAS1, TAS2 or TAS3 endogenous transcripts by participating in the production of their initiating miRNAs. Involved with argonaute 1 (AGO1) in the guide strand selection from miRNA duplexes, presumably by directional loading of the miRNA duplex (guide stand and passenger strand) onto the RNA-induced silencing complex (RISC) for passenger strand degradation. Does not participate in sense transgene-induced post-transcriptional gene silencing (S-PTGS). Involved in several plant development aspects and response to hormones through its role in miRNAs processing. The sequence is that of Double-stranded RNA-binding protein 1 (DRB1) from Arabidopsis thaliana (Mouse-ear cress).